A 96-amino-acid chain; its full sequence is Protein CLAVATA 3 (96 aa).

The signal sequence occupies residues 1 to 21 (MDSKSFLLLLLLFCFLFLHDA). The interval 68–96 (ELRTVPSGPDPLHHHVNPPRQPRNNFQLP) is disordered. Residues Pro73 and Pro76 each carry the hydroxyproline modification. O-linked (Ara...) hydroxyproline glycosylation occurs at Pro76.

Belongs to the CLV3/ESR signal peptide family. Interacts with the extracellular leucine-rich repeat region of CLV1. Interacts with CLV2. CLV3-derived CLE peptides interacts with a tetrameric complex made of two CLV2/CRN heterodimers. Post-translationally, the MCLV3 peptide contains two hydroxyprolines, but hydroxylation had no direct effect on MCLV3 activity. The O-glycosylation (arabinosylation) of the hydroxyproline P-76 enhances binding affinity of the MCLV3 peptide for its receptor. First detected in heart stage embryos in a patch of cells between the developing cotyledons. In vegetative and inflorescence meristems, expressed in a small cone of cells at the meristem apex.

The protein resides in the secreted. It localises to the extracellular space. Its function is as follows. Extracellular signal that regulates meristem maintenance. Acts with CLV1 as a ligand-receptor pair in a signal transduction pathway coordinating growth between adjacent meristematic regions and controlling the balance between meristem cell proliferation and differentiation. The secreted peptide MCLV3 activates a signal transduction cascade to restrict WUSCHEL (WUS) expression, inducing shoot and root meristem consumption as cells differentiated into other organs. The polypeptide is Protein CLAVATA 3 (Arabidopsis thaliana (Mouse-ear cress)).